Reading from the N-terminus, the 298-residue chain is Ribosomal protein L11 methyltransferase (298 aa).

Threonine 152, glycine 176, aspartate 198, and asparagine 236 together coordinate S-adenosyl-L-methionine.

This sequence belongs to the methyltransferase superfamily. PrmA family.

The protein localises to the cytoplasm. It catalyses the reaction L-lysyl-[protein] + 3 S-adenosyl-L-methionine = N(6),N(6),N(6)-trimethyl-L-lysyl-[protein] + 3 S-adenosyl-L-homocysteine + 3 H(+). Functionally, methylates ribosomal protein L11. This is Ribosomal protein L11 methyltransferase from Polaromonas sp. (strain JS666 / ATCC BAA-500).